Here is a 229-residue protein sequence, read N- to C-terminus: Large ribosomal subunit protein uL1 (229 aa).

The protein belongs to the universal ribosomal protein uL1 family. As to quaternary structure, part of the 50S ribosomal subunit.

In terms of biological role, binds directly to 23S rRNA. The L1 stalk is quite mobile in the ribosome, and is involved in E site tRNA release. Functionally, protein L1 is also a translational repressor protein, it controls the translation of the L11 operon by binding to its mRNA. The protein is Large ribosomal subunit protein uL1 of Lactiplantibacillus plantarum (strain ATCC BAA-793 / NCIMB 8826 / WCFS1) (Lactobacillus plantarum).